Consider the following 101-residue polypeptide: RNA-binding protein Hfq (101 aa).

The Sm domain occupies 9–68; it reads DPFLNALRRERVPVSIYLVNGIKLQGQIESFDQFVILLKNTVSQMVYKHAISTVVPSRPV. Residues 63-101 are disordered; that stretch reads VPSRPVSHHNNNPSGGSSNYHHGSTPASQPSQPESDDAE. Low complexity predominate over residues 70-86; sequence HHNNNPSGGSSNYHHGS.

This sequence belongs to the Hfq family. In terms of assembly, homohexamer.

In terms of biological role, RNA chaperone that binds small regulatory RNA (sRNAs) and mRNAs to facilitate mRNA translational regulation in response to envelope stress, environmental stress and changes in metabolite concentrations. Also binds with high specificity to tRNAs. In Sodalis glossinidius (strain morsitans), this protein is RNA-binding protein Hfq.